The sequence spans 98 residues: U10-barytoxin-Tl1a (98 aa).

The N-terminal stretch at 1 to 21 is a signal peptide; that stretch reads MKTLVLVAVLGVASLYLLSSA. A propeptide spanning residues 22-50 is cleaved from the precursor; the sequence is SEVQQLSPAEEEFRAFVSTFGGLFETEER. 3 disulfides stabilise this stretch: Cys-57-Cys-71, Cys-64-Cys-76, and Cys-70-Cys-89.

The protein belongs to the neurotoxin 10 (Hwtx-1) family. 27 (ICK-3) subfamily. In terms of tissue distribution, expressed by the venom gland.

It localises to the secreted. Ion channel inhibitor. The chain is U10-barytoxin-Tl1a from Trittame loki (Brush-footed trapdoor spider).